A 604-amino-acid polypeptide reads, in one-letter code: Deuterosome assembly protein 1 (604 aa).

4 coiled-coil regions span residues 14 to 59, 85 to 197, 226 to 278, and 336 to 399; these read CEAE…NAQT, MTQN…GKKQ, IIEK…ELQS, and QDQP…KQLK. Position 547 is a phosphoserine (Ser-547). A coiled-coil region spans residues 558-601; sequence AAQHFLLEEEKRAKELEKLLNTHIDELQRHTEFTLNKYSKLKQN.

This sequence belongs to the CEP63 family. Interacts with CEP152; the interaction is mutually exclusive with CEP63.

It is found in the cytoplasm. Functionally, key structural component of the deuterosome, a structure that promotes de novo centriole amplification in multiciliated cells. Deuterosome-mediated centriole amplification occurs in terminally differentiated multiciliated cells and can generate more than 100 centrioles. Probably sufficient for the specification and formation of the deuterosome inner core. Interacts with CEP152 and recruits PLK4 to activate centriole biogenesis. The chain is Deuterosome assembly protein 1 from Homo sapiens (Human).